The sequence spans 138 residues: Large ribosomal subunit protein uL16 (138 aa).

Positions 1 to 17 are enriched in basic residues; sequence MLIPRKVKHRKQHHPRQ. A disordered region spans residues 1 to 22; that stretch reads MLIPRKVKHRKQHHPRQRGIAS.

Belongs to the universal ribosomal protein uL16 family. As to quaternary structure, part of the 50S ribosomal subunit.

Its function is as follows. Binds 23S rRNA and is also seen to make contacts with the A and possibly P site tRNAs. In Mycobacterium leprae (strain Br4923), this protein is Large ribosomal subunit protein uL16.